Reading from the N-terminus, the 143-residue chain is Histone H2B.2, sperm (143 aa).

A disordered region spans residues 1 to 49 (MPKSPSKSSPRKGSPRKGSPRKGSPKRGGKGAKRAGKGGRRNVVKRRRR). Short sequence motifs (SPKK motif) lie at residues 4–7 (SPSK), 9–12 (SPRK), 14–17 (SPRK), 19–22 (SPRK), and 24–27 (SPKR). Basic residues predominate over residues 9–49 (SPRKGSPRKGSPRKGSPKRGGKGAKRAGKGGRRNVVKRRRR). 3 positions are modified to phosphoserine: S14, S19, and S24. The O-linked (GlcNAc) serine glycan is linked to S129. Residue K137 forms a Glycyl lysine isopeptide (Lys-Gly) (interchain with G-Cter in ubiquitin) linkage.

Belongs to the histone H2B family. As to quaternary structure, the nucleosome is a histone octamer containing two molecules each of H2A, H2B, H3 and H4 assembled in one H3-H4 heterotetramer and two H2A-H2B heterodimers. The octamer wraps approximately 147 bp of DNA. Monoubiquitination of Lys-137 gives a specific tag for epigenetic transcriptional activation and is also prerequisite for histone H3 'Lys-4' and 'Lys-79' methylation. Post-translationally, phosphorylated on SPKK motifs 3, 4 and 5; which may regulate DNA binding. Dephosphorylated during maturation of spermatids to mature sperm and rephosphorylated at fertilization. In terms of processing, glcNAcylation at Ser-129 promotes monoubiquitination of Lys-137. It fluctuates in response to extracellular glucose, and associates with transcribed genes.

Its subcellular location is the nucleus. The protein localises to the chromosome. In terms of biological role, core component of nucleosome. Nucleosomes wrap and compact DNA into chromatin, limiting DNA accessibility to the cellular machineries which require DNA as a template. Histones thereby play a central role in transcription regulation, DNA repair, DNA replication and chromosomal stability. DNA accessibility is regulated via a complex set of post-translational modifications of histones, also called histone code, and nucleosome remodeling. This chain is Histone H2B.2, sperm, found in Psammechinus miliaris (Green sea urchin).